The following is a 426-amino-acid chain: Serine--tRNA ligase (426 aa).

Residue 233 to 235 (TAE) participates in L-serine binding. Residue 264–266 (RRE) coordinates ATP. Residue Glu-287 participates in L-serine binding. ATP is bound at residue 351–354 (EISS). Ser-386 is an L-serine binding site.

It belongs to the class-II aminoacyl-tRNA synthetase family. Type-1 seryl-tRNA synthetase subfamily. Homodimer. The tRNA molecule binds across the dimer.

The protein resides in the cytoplasm. The catalysed reaction is tRNA(Ser) + L-serine + ATP = L-seryl-tRNA(Ser) + AMP + diphosphate + H(+). It catalyses the reaction tRNA(Sec) + L-serine + ATP = L-seryl-tRNA(Sec) + AMP + diphosphate + H(+). Its pathway is aminoacyl-tRNA biosynthesis; selenocysteinyl-tRNA(Sec) biosynthesis; L-seryl-tRNA(Sec) from L-serine and tRNA(Sec): step 1/1. Catalyzes the attachment of serine to tRNA(Ser). Is also able to aminoacylate tRNA(Sec) with serine, to form the misacylated tRNA L-seryl-tRNA(Sec), which will be further converted into selenocysteinyl-tRNA(Sec). This Prochlorococcus marinus (strain NATL2A) protein is Serine--tRNA ligase.